Reading from the N-terminus, the 484-residue chain is tRNA sulfurtransferase (484 aa).

One can recognise a THUMP domain in the interval 63 to 167 (EAFAERLACI…NDNLYLIDKR (105 aa)). ATP contacts are provided by residues 185–186 (LI), K267, G289, and Q298. A disulfide bridge connects residues C346 and C458. A Rhodanese domain is found at 406 to 484 (ISAGEIIIDV…GYNNVKVYRP (79 aa)). The active-site Cysteine persulfide intermediate is the C458.

Belongs to the ThiI family.

Its subcellular location is the cytoplasm. It carries out the reaction [ThiI sulfur-carrier protein]-S-sulfanyl-L-cysteine + a uridine in tRNA + 2 reduced [2Fe-2S]-[ferredoxin] + ATP + H(+) = [ThiI sulfur-carrier protein]-L-cysteine + a 4-thiouridine in tRNA + 2 oxidized [2Fe-2S]-[ferredoxin] + AMP + diphosphate. The enzyme catalyses [ThiS sulfur-carrier protein]-C-terminal Gly-Gly-AMP + S-sulfanyl-L-cysteinyl-[cysteine desulfurase] + AH2 = [ThiS sulfur-carrier protein]-C-terminal-Gly-aminoethanethioate + L-cysteinyl-[cysteine desulfurase] + A + AMP + 2 H(+). Its pathway is cofactor biosynthesis; thiamine diphosphate biosynthesis. Functionally, catalyzes the ATP-dependent transfer of a sulfur to tRNA to produce 4-thiouridine in position 8 of tRNAs, which functions as a near-UV photosensor. Also catalyzes the transfer of sulfur to the sulfur carrier protein ThiS, forming ThiS-thiocarboxylate. This is a step in the synthesis of thiazole, in the thiamine biosynthesis pathway. The sulfur is donated as persulfide by IscS. This is tRNA sulfurtransferase from Shewanella pealeana (strain ATCC 700345 / ANG-SQ1).